The following is a 1309-amino-acid chain: Tetratricopeptide repeat protein 41 (1309 aa).

TPR repeat units lie at residues 399–432 (PQLE…KPCI), 651–684 (WIQE…SVRE), 817–851 (LTFL…SVQS), 859–892 (LKAQ…LLRF), 989–1024 (MSYF…KEKA), and 1042–1079 (SDTL…RAAH).

Its subcellular location is the cytoplasm. This is Tetratricopeptide repeat protein 41 from Rattus norvegicus (Rat).